The chain runs to 134 residues: MRCLISLVLGLLALEVALAQNLEEQVFNSVQSMFQKASPIEGTECIICQTNEECAQNAMCCPGSCGRTRKTPVNIGVPKAGFCPWNLLQTISSTGPCPMKIECSSDRECSGNMKCCNVDCVMTCTPPVPVITLQ.

Positions 1-19 are cleaved as a signal peptide; the sequence is MRCLISLVLGLLALEVALA. The 47-residue stretch at 27 to 73 folds into the WAP 1; atypical domain; the sequence is FNSVQSMFQKASPIEGTECIICQTNEECAQNAMCCPGSCGRTRKTPV. 6 cysteine pairs are disulfide-bonded: cysteine 45/cysteine 65, cysteine 48/cysteine 60, cysteine 83/cysteine 116, cysteine 97/cysteine 120, cysteine 103/cysteine 115, and cysteine 109/cysteine 124. In terms of domain architecture, WAP 2 spans 76 to 128; it reads GVPKAGFCPWNLLQTISSTGPCPMKIECSSDRECSGNMKCCNVDCVMTCTPPV.

Post-translationally, no phosphate or carbohydrate binding could be detected; however, both cholesterol and triglyceride are associated with the mouse protein. In terms of tissue distribution, milk-specific; major protein component of milk whey.

The protein localises to the secreted. Functionally, could be a protease inhibitor. May play an important role in mammary gland development and tissue remodeling. The protein is Whey acidic protein (Wap) of Mus musculus (Mouse).